A 278-amino-acid chain; its full sequence is S-formylglutathione hydrolase YeiG (278 aa).

Catalysis depends on charge relay system residues Ser145, Asp223, and His256.

Belongs to the esterase D family.

The enzyme catalyses S-formylglutathione + H2O = formate + glutathione + H(+). Its function is as follows. Serine hydrolase involved in the detoxification of formaldehyde. Hydrolyzes S-formylglutathione to glutathione and formate. The sequence is that of S-formylglutathione hydrolase YeiG (yeiG) from Shigella dysenteriae serotype 1 (strain Sd197).